A 238-amino-acid chain; its full sequence is MTDTQQPELTEDGRQRRTIKSFVMRAGRMTEGQQRGLDKGWPLFGLELEDGLRDFDQVFGRSAPRTFEIGFGMGHSTLEMAAAAPEQDFIGVEVHKPGVGALLNGVMAHNLSNVRVYSCDALEVLQGCVADASLDRVLLFFPDPWHKSRHHKRRIVQPAFAELVRRKLKIGGVLHMATDWENYAEHMLEVMNAAPGYRNLAADGTYVPRPEERPVTKFERRGERLGHGVWDLKFQRQE.

S-adenosyl-L-methionine contacts are provided by Glu68, Glu93, Asp120, and Asp143. Asp143 is a catalytic residue. Residues Lys147, Asp179, and 216 to 219 (TKFE) contribute to the substrate site.

Belongs to the class I-like SAM-binding methyltransferase superfamily. TrmB family.

It carries out the reaction guanosine(46) in tRNA + S-adenosyl-L-methionine = N(7)-methylguanosine(46) in tRNA + S-adenosyl-L-homocysteine. Its pathway is tRNA modification; N(7)-methylguanine-tRNA biosynthesis. In terms of biological role, catalyzes the formation of N(7)-methylguanine at position 46 (m7G46) in tRNA. In Ectopseudomonas mendocina (strain ymp) (Pseudomonas mendocina), this protein is tRNA (guanine-N(7)-)-methyltransferase.